The sequence spans 296 residues: 4-diphosphocytidyl-2-C-methyl-D-erythritol kinase (296 aa).

Residue K11 is part of the active site. 95 to 105 is a binding site for ATP; that stretch reads PVAAGMAGGSS. The active site involves D137.

This sequence belongs to the GHMP kinase family. IspE subfamily.

The enzyme catalyses 4-CDP-2-C-methyl-D-erythritol + ATP = 4-CDP-2-C-methyl-D-erythritol 2-phosphate + ADP + H(+). It participates in isoprenoid biosynthesis; isopentenyl diphosphate biosynthesis via DXP pathway; isopentenyl diphosphate from 1-deoxy-D-xylulose 5-phosphate: step 3/6. Functionally, catalyzes the phosphorylation of the position 2 hydroxy group of 4-diphosphocytidyl-2C-methyl-D-erythritol. The polypeptide is 4-diphosphocytidyl-2-C-methyl-D-erythritol kinase (Clostridioides difficile (strain 630) (Peptoclostridium difficile)).